The following is a 550-amino-acid chain: MEEAELVKERLQAITDKRKIQEEISQKRLKIEEEKLKHQHLKKKALREKWLLDGISSGKEQEEMKKQNQQDQHQIQVLEQSILRLEKEIQDLEKAELQISTNEEAILKKLKSVERTTEDIIRSVKVEKEETSGESVEDIYANIPDLPKSYIPSRLRKERNEGIEDDEQNRKALYAMEIKVEKDLKTGESTVLSSIPLPSDDFKGTGIKVYDDGQKSVYAVSSNHSAAYNGTDGLAPVEVEELLRQASERNSKSPTEYHEPVYANPFCRPTTPQREKVTPGPNFQERVKIKANGLGNDVNGSIHNIDNGLAEERGNNVNHISPARPIPHPRSMIQQAEEMPHIQQERLMTPWEEPNVMQDKYTPSPKSGLSPSRALVEKSERQSSSPPCQEDEKDIRYNIVHSLPSDLDEKEPVTMIFMGYQQAEDNEEEKKLLTGYDGIIHAELVVIDDEEEGEGEAEKPAYHPIAPHSQVFQPAKPTPLPRKRAEVNPHENTNHKSPHKNSISLKEQEESLGSPIHHSPLDVQIAGDGTEDPSLTALRMRMAKLGKKVI.

Residue Met1 is modified to N-acetylmethionine. Residues 2–106 (EEAELVKERL…LQISTNEEAI (105 aa)) adopt a coiled-coil conformation. A Glycyl lysine isopeptide (Lys-Gly) (interchain with G-Cter in SUMO2) cross-link involves residue Lys125. Ser135 is modified (phosphoserine). Lys179 is covalently cross-linked (Glycyl lysine isopeptide (Lys-Gly) (interchain with G-Cter in SUMO1); alternate). A Glycyl lysine isopeptide (Lys-Gly) (interchain with G-Cter in SUMO2); alternate cross-link involves residue Lys179. Residues 248-259 (ERNSKSPTEYHE) are compositionally biased toward basic and acidic residues. A disordered region spans residues 248–280 (ERNSKSPTEYHEPVYANPFCRPTTPQREKVTPG). Position 271 is a phosphothreonine (Thr271). Ser321, Ser370, Ser384, and Ser385 each carry phosphoserine. Disordered regions lie at residues 356 to 393 (VMQD…EDEK) and 463 to 528 (HPIA…IAGD). Positions 483–494 (KRAEVNPHENTN) are enriched in basic and acidic residues. Ser497, Ser514, and Ser519 each carry phosphoserine.

It belongs to the paralemmin family. Interacts with GLUL. Post-translationally, phosphorylated.

It is found in the cytoplasm. It localises to the cell projection. Its subcellular location is the dendrite. The protein resides in the dendritic spine. The protein is Palmdelphin (PALMD) of Bos taurus (Bovine).